Consider the following 304-residue polypeptide: N-acetylmuramic acid 6-phosphate etherase (304 aa).

The 164-residue stretch at 57-220 (AVKGLSAGGR…STATMVGLGK (164 aa)) folds into the SIS domain. The active-site Proton donor is the Glu85. Glu116 is a catalytic residue.

This sequence belongs to the GCKR-like family. MurNAc-6-P etherase subfamily. In terms of assembly, homodimer.

The catalysed reaction is N-acetyl-D-muramate 6-phosphate + H2O = N-acetyl-D-glucosamine 6-phosphate + (R)-lactate. The protein operates within amino-sugar metabolism; N-acetylmuramate degradation. Functionally, specifically catalyzes the cleavage of the D-lactyl ether substituent of MurNAc 6-phosphate, producing GlcNAc 6-phosphate and D-lactate. The protein is N-acetylmuramic acid 6-phosphate etherase of Cutibacterium acnes (strain DSM 16379 / KPA171202) (Propionibacterium acnes).